A 247-amino-acid chain; its full sequence is UPF0259 membrane protein BUAPTUC7_273 (247 aa).

The next 6 helical transmembrane spans lie at 20–40 (IGAI…IDMF), 85–105 (IMES…LISF), 114–134 (IVSS…LNFL), 137–157 (FIIQ…SIIL), 188–208 (IIGP…MLLA), and 218–238 (LFLI…IYLF).

The protein belongs to the UPF0259 family.

It is found in the cell membrane. This chain is UPF0259 membrane protein BUAPTUC7_273, found in Buchnera aphidicola subsp. Acyrthosiphon pisum (strain Tuc7).